The following is a 505-amino-acid chain: Pentatricopeptide repeat-containing protein At2g17033 (505 aa).

3 PPR repeats span residues 243-277 (KTQA…KIKP), 278-312 (GLFE…GHKI), and 313-347 (DTVC…NVPF). The Smr domain occupies 413-503 (LDLHGMHLSS…AKGKTVKEWL (91 aa)).

Belongs to the PPR family. P subfamily.

The protein is Pentatricopeptide repeat-containing protein At2g17033 of Arabidopsis thaliana (Mouse-ear cress).